A 363-amino-acid polypeptide reads, in one-letter code: uncharacterized protein (363 aa).

Helical transmembrane passes span 34–54 (YVYD…IILW), 60–80 (LALF…TLLV), 91–111 (EIAD…TAAG), and 112–132 (LMFS…PLFL). The span at 232 to 245 (SSTTTHSTDSEQIL) shows a compositional bias: polar residues. The disordered stretch occupies residues 232-363 (SSTTTHSTDS…SSQKKKPSRK (132 aa)). Composition is skewed to low complexity over residues 246–268 (TSVS…TPPN) and 275–285 (DSNSSDSSSSS). Over residues 322-342 (SRSERNAQHHRNKDQEQRQDS) the composition is skewed to basic and acidic residues.

This sequence belongs to the chlamydial CPn_0443/CT_005/TC_0273 family.

The protein resides in the cell membrane. This is an uncharacterized protein from Chlamydia trachomatis serovar D (strain ATCC VR-885 / DSM 19411 / UW-3/Cx).